The primary structure comprises 230 residues: Orotidine 5'-phosphate decarboxylase (230 aa).

Residues Asp-11, Lys-34, Asp-61 to Thr-70, Thr-117, Arg-179, Gln-188, Gly-208, and Arg-209 contribute to the substrate site. The Proton donor role is filled by Lys-63.

It belongs to the OMP decarboxylase family. Type 1 subfamily. As to quaternary structure, homodimer.

The enzyme catalyses orotidine 5'-phosphate + H(+) = UMP + CO2. Its pathway is pyrimidine metabolism; UMP biosynthesis via de novo pathway; UMP from orotate: step 2/2. Its function is as follows. Catalyzes the decarboxylation of orotidine 5'-monophosphate (OMP) to uridine 5'-monophosphate (UMP). This is Orotidine 5'-phosphate decarboxylase from Streptococcus sanguinis (strain SK36).